Reading from the N-terminus, the 261-residue chain is MRVALGIEYDGSKYFGWQRQVEVDSVQAQLERALSKVANEPISVHCAGRTDTGVHATGQVVHFDTDAIRKESAWTLGVNVSLPDDIAVRWAKVVDEDFHARFSATARRYRYMIYNYQLRPGILRSGVSHYRTHLDENKMHEAAQHFVGEHDFTSFRALHCQSKSPNRNVHEVNVTRQGMYICVDIKANAFLHHMVRNIVGSLIEIGLGHQSHEWIPELLALKDRSKAAPTAKPNGLYMVDVTYPEHFQLPKLALGPLFMLD.

D51 acts as the Nucleophile in catalysis. Y109 is a binding site for substrate.

It belongs to the tRNA pseudouridine synthase TruA family. Homodimer.

The enzyme catalyses uridine(38/39/40) in tRNA = pseudouridine(38/39/40) in tRNA. Formation of pseudouridine at positions 38, 39 and 40 in the anticodon stem and loop of transfer RNAs. The polypeptide is tRNA pseudouridine synthase A (Shewanella woodyi (strain ATCC 51908 / MS32)).